Reading from the N-terminus, the 652-residue chain is Probable protein phosphatase 2C 19 (652 aa).

A PPM-type phosphatase domain is found at Lys-265 to Phe-517. Mn(2+)-binding residues include Asp-300, Gly-301, Glu-467, and Asp-508. The interval Ala-524 to Glu-567 is disordered.

Belongs to the PP2C family. Mg(2+) serves as cofactor. Mn(2+) is required as a cofactor.

The catalysed reaction is O-phospho-L-seryl-[protein] + H2O = L-seryl-[protein] + phosphate. It catalyses the reaction O-phospho-L-threonyl-[protein] + H2O = L-threonyl-[protein] + phosphate. This Oryza sativa subsp. japonica (Rice) protein is Probable protein phosphatase 2C 19.